Consider the following 588-residue polypeptide: DNA mismatch repair protein MutL (588 aa).

Belongs to the DNA mismatch repair MutL/HexB family.

Its function is as follows. This protein is involved in the repair of mismatches in DNA. It is required for dam-dependent methyl-directed DNA mismatch repair. May act as a 'molecular matchmaker', a protein that promotes the formation of a stable complex between two or more DNA-binding proteins in an ATP-dependent manner without itself being part of a final effector complex. The protein is DNA mismatch repair protein MutL of Methanocorpusculum labreanum (strain ATCC 43576 / DSM 4855 / Z).